We begin with the raw amino-acid sequence, 285 residues long: uncharacterized protein (285 aa).

The chain crosses the membrane as a helical span at residues 6–26 (IKYFSTIIVAVVAVLAGWWLW).

It belongs to the membrane fusion protein (MFP) (TC 8.A.1) family.

The protein localises to the membrane. This is an uncharacterized protein from Escherichia coli (strain K12).